The sequence spans 175 residues: MSQALTLARPYARAAFAIAREGGKFAPWSDALAFSAQVAGDPRVAALLLNPALHQDQAVTLLAPPAAEADYQRFLGLLADAQRLALLPEIAGLYEQLRAEAEHVVKATVTSATDMSPAELATITAALKKRFGREVDVTTAVDASLIGGAVIDTGEMVIDGSLKGKLARLQNSLAH.

Belongs to the ATPase delta chain family. F-type ATPases have 2 components, F(1) - the catalytic core - and F(0) - the membrane proton channel. F(1) has five subunits: alpha(3), beta(3), gamma(1), delta(1), epsilon(1). F(0) has three main subunits: a(1), b(2) and c(10-14). The alpha and beta chains form an alternating ring which encloses part of the gamma chain. F(1) is attached to F(0) by a central stalk formed by the gamma and epsilon chains, while a peripheral stalk is formed by the delta and b chains.

The protein localises to the cell inner membrane. F(1)F(0) ATP synthase produces ATP from ADP in the presence of a proton or sodium gradient. F-type ATPases consist of two structural domains, F(1) containing the extramembraneous catalytic core and F(0) containing the membrane proton channel, linked together by a central stalk and a peripheral stalk. During catalysis, ATP synthesis in the catalytic domain of F(1) is coupled via a rotary mechanism of the central stalk subunits to proton translocation. In terms of biological role, this protein is part of the stalk that links CF(0) to CF(1). It either transmits conformational changes from CF(0) to CF(1) or is implicated in proton conduction. The chain is ATP synthase subunit delta from Xanthomonas campestris pv. campestris (strain 8004).